A 150-amino-acid polypeptide reads, in one-letter code: uncharacterized protein (150 aa).

5 consecutive repeat copies span residues 101-105 (FHEVN), 106-110 (HHEVN), 111-115 (HHKIN), 116-120 (HHEVN), and 121-125 (HHKIN). The interval 101-125 (FHEVNHHEVNHHKINHHEVNHHKIN) is 5 X 5 AA tandem repeats of [FH]-H-[EK]-[IV]-N.

It belongs to the asfivirus D129L family.

This is an uncharacterized protein from African swine fever virus (isolate Tick/Malawi/Lil 20-1/1983) (ASFV).